Here is a 223-residue protein sequence, read N- to C-terminus: Sigma non-opioid intracellular receptor 1 (223 aa).

At 1-9 (MQWAVGRRW) the chain is on the lumenal side. Residues 2-8 (QWAVGRR) form a targeting to endoplasmic reticulum-associated lipid droplets region. The chain crosses the membrane as a helical span at residues 10 to 30 (AWAALLLAVAAVLTQVVWLWL). The Cytoplasmic segment spans residues 31–223 (GTQSFVFQRE…LTTYLFGQDP (193 aa)). Residues 99 to 106 (SLSEYVLL) form an important for ligand-binding region. Positions 177-223 (VIPSTLAFALADTVFSTQDFLTLFYTLRSYARGLRLELTTYLFGQDP) are C-terminal hydrophobic region.

Belongs to the ERG2 family. In terms of assembly, homotrimer. Forms a ternary complex with ANK2 and ITPR3. The complex is disrupted by agonists. Interacts with KCNA4. Interacts with KCNA2; cocaine consumption leads to increased interaction. Interacts with RNF112 in an oxidative stress-regulated manner. In terms of tissue distribution, widely expressed with higher expression in liver, colon, prostate, placenta, small intestine, heart and pancreas. Expressed in the retina by retinal pigment epithelial cells. Expressed in alpha-motor neurons.

Its subcellular location is the nucleus inner membrane. It is found in the nucleus outer membrane. It localises to the nucleus envelope. The protein resides in the cytoplasmic vesicle. The protein localises to the endoplasmic reticulum membrane. Its subcellular location is the membrane. It is found in the lipid droplet. It localises to the cell junction. The protein resides in the cell membrane. The protein localises to the cell projection. Its subcellular location is the growth cone. It is found in the postsynaptic density membrane. Its function is as follows. Functions in lipid transport from the endoplasmic reticulum and is involved in a wide array of cellular functions probably through regulation of the biogenesis of lipid microdomains at the plasma membrane. Involved in the regulation of different receptors it plays a role in BDNF signaling and EGF signaling. Also regulates ion channels like the potassium channel and could modulate neurotransmitter release. Plays a role in calcium signaling through modulation together with ANK2 of the ITP3R-dependent calcium efflux at the endoplasmic reticulum. Plays a role in several other cell functions including proliferation, survival and death. Originally identified for its ability to bind various psychoactive drugs it is involved in learning processes, memory and mood alteration. Necessary for proper mitochondrial axonal transport in motor neurons, in particular the retrograde movement of mitochondria. Plays a role in protecting cells against oxidative stress-induced cell death via its interaction with RNF112. The chain is Sigma non-opioid intracellular receptor 1 (SIGMAR1) from Homo sapiens (Human).